Consider the following 369-residue polypeptide: uncharacterized protein (369 aa).

An N-terminal signal peptide occupies residues 1 to 19 (MKKLIAVAVLSACGSLAHA).

This is an uncharacterized protein from Haemophilus influenzae (strain ATCC 51907 / DSM 11121 / KW20 / Rd).